Reading from the N-terminus, the 430-residue chain is MFTAYQDARSWIHGRLKFGVKPGLGRMKQLMARLGHPEKKIRAFHVAGTNGKGSTVAFIRSMLQEAGYTVGTFTSPYIITFNERISVNGIPISDEEWTALVNQMKPHVEALDQTEYGQPTEFEIMTACAFLYFAEFHKVDFVIFETGLGGRFDSTNVVEPLLTVITSIGHDHMNILGNTIEEIAGEKAGIIKEGIPIVTAVTQPEALQVIRHEAERHAAPFQSLHDACVIFNEEALPAGEQFSFKTEEKCYEDIRTSLIGTHQRQNAALSILAAEWLNKENIAHISDEALRSGLVKAAWPGRLELVQEHPPVYLDGAHNEEGVEKLAETMKQRFANSRISVVFSALKDKPYQNMIKRLETIAHAIHFASFDFPRASLAKDLYDASEISNKSWSEDPDDVIKFIESKKGSNEIVLITGSLYFISDIRKRLK.

51–54 (GKGS) lines the ATP pocket. Serine 75 serves as a coordination point for Mg(2+). 114 to 117 (TEYG) is a binding site for 7,8-dihydropteroate. Position 145 (glutamate 145) interacts with Mg(2+). Residue 152 to 154 (FDS) coordinates 7,8-dihydropteroate. Histidine 172 serves as a coordination point for Mg(2+). Positions 263, 302, and 315 each coordinate ATP.

The protein belongs to the folylpolyglutamate synthase family. Monomer. Requires Mg(2+) as cofactor.

The catalysed reaction is 7,8-dihydropteroate + L-glutamate + ATP = 7,8-dihydrofolate + ADP + phosphate + H(+). It catalyses the reaction (6S)-5,6,7,8-tetrahydrofolyl-(gamma-L-Glu)(n) + L-glutamate + ATP = (6S)-5,6,7,8-tetrahydrofolyl-(gamma-L-Glu)(n+1) + ADP + phosphate + H(+). Its pathway is cofactor biosynthesis; tetrahydrofolate biosynthesis; 7,8-dihydrofolate from 2-amino-4-hydroxy-6-hydroxymethyl-7,8-dihydropteridine diphosphate and 4-aminobenzoate: step 2/2. The protein operates within cofactor biosynthesis; tetrahydrofolylpolyglutamate biosynthesis. Functions in two distinct reactions of the de novo folate biosynthetic pathway. Catalyzes the addition of a glutamate residue to dihydropteroate (7,8-dihydropteroate or H2Pte) to form dihydrofolate (7,8-dihydrofolate monoglutamate or H2Pte-Glu). Also catalyzes successive additions of L-glutamate to tetrahydrofolate, leading to folylpolyglutamate derivatives. This chain is Dihydrofolate synthase/folylpolyglutamate synthase (folC), found in Bacillus subtilis (strain 168).